The following is a 661-amino-acid chain: DnaJ protein ERDJ2B (661 aa).

Residues 1-8 (MAESEENS) are Lumenal-facing. A helical membrane pass occupies residues 9-29 (VLFPIFILTMMAIPLVPYTFV). Topologically, residues 30–65 (KLSRAFSKKQRSIHCQCLECDRSGKYKRSISQSISS) are cytoplasmic. Residues 66 to 86 (FTSCSNLTVVLLWIVMIFLIY) form a helical membrane-spanning segment. The Lumenal segment spans residues 87 to 190 (HTKNMSRESQ…FILNMNGESG (104 aa)). N-linked (GlcNAc...) asparagine glycosylation occurs at asparagine 90. The region spanning 99–164 (EPFGILGLEP…LSRENFEKYG (66 aa)) is the J domain. The helical transmembrane segment at 191 to 211 (GILLLCTVGLCILLPLVIASI) threads the bilayer. Residues 206–597 (LVIASIYLWR…IGCDQKTSLK (392 aa)) form the SEC63 domain. At 212–661 (YLWRSSKYTG…SSEESGSDEE (450 aa)) the chain is on the cytoplasmic side. The tract at residues 608-661 (EGENAEEGLEEEDDEIEEEDYESEYSEDEEDKKRGSKKKVNKESSSEESGSDEE) is disordered. Residues 609–637 (GENAEEGLEEEDDEIEEEDYESEYSEDEE) are compositionally biased toward acidic residues.

Interacts with OEP61/TPR7. In terms of tissue distribution, expressed in leaves, flower buds and flowers.

It localises to the endoplasmic reticulum membrane. In terms of biological role, required for integral membrane and secreted preprotein translocation across the endoplasmic reticulum membrane. This chain is DnaJ protein ERDJ2B (ERDJ2B), found in Arabidopsis thaliana (Mouse-ear cress).